A 258-amino-acid chain; its full sequence is 1-(5-phosphoribosyl)-5-[(5-phosphoribosylamino)methylideneamino] imidazole-4-carboxamide isomerase (258 aa).

Residue Asp-17 is the Proton acceptor of the active site. Asp-136 functions as the Proton donor in the catalytic mechanism.

Belongs to the HisA/HisF family.

Its subcellular location is the cytoplasm. The catalysed reaction is 1-(5-phospho-beta-D-ribosyl)-5-[(5-phospho-beta-D-ribosylamino)methylideneamino]imidazole-4-carboxamide = 5-[(5-phospho-1-deoxy-D-ribulos-1-ylimino)methylamino]-1-(5-phospho-beta-D-ribosyl)imidazole-4-carboxamide. It functions in the pathway amino-acid biosynthesis; L-histidine biosynthesis; L-histidine from 5-phospho-alpha-D-ribose 1-diphosphate: step 4/9. In Corynebacterium jeikeium (strain K411), this protein is 1-(5-phosphoribosyl)-5-[(5-phosphoribosylamino)methylideneamino] imidazole-4-carboxamide isomerase.